Here is a 420-residue protein sequence, read N- to C-terminus: Glutamate-1-semialdehyde 2,1-aminomutase (420 aa).

At Lys259 the chain carries N6-(pyridoxal phosphate)lysine.

This sequence belongs to the class-III pyridoxal-phosphate-dependent aminotransferase family. HemL subfamily. Homodimer. It depends on pyridoxal 5'-phosphate as a cofactor.

The protein resides in the cytoplasm. The catalysed reaction is (S)-4-amino-5-oxopentanoate = 5-aminolevulinate. It participates in porphyrin-containing compound metabolism; protoporphyrin-IX biosynthesis; 5-aminolevulinate from L-glutamyl-tRNA(Glu): step 2/2. The protein is Glutamate-1-semialdehyde 2,1-aminomutase of Nautilia profundicola (strain ATCC BAA-1463 / DSM 18972 / AmH).